Reading from the N-terminus, the 210-residue chain is Imidazole glycerol phosphate synthase subunit HisH (210 aa).

The 206-residue stretch at 3–208 folds into the Glutamine amidotransferase type-1 domain; that stretch reads PIAIIDYGMG…GELVRHAGNA (206 aa). The active-site Nucleophile is Cys-81. Catalysis depends on residues His-183 and Glu-185.

As to quaternary structure, heterodimer of HisH and HisF.

It is found in the cytoplasm. The catalysed reaction is 5-[(5-phospho-1-deoxy-D-ribulos-1-ylimino)methylamino]-1-(5-phospho-beta-D-ribosyl)imidazole-4-carboxamide + L-glutamine = D-erythro-1-(imidazol-4-yl)glycerol 3-phosphate + 5-amino-1-(5-phospho-beta-D-ribosyl)imidazole-4-carboxamide + L-glutamate + H(+). The enzyme catalyses L-glutamine + H2O = L-glutamate + NH4(+). It functions in the pathway amino-acid biosynthesis; L-histidine biosynthesis; L-histidine from 5-phospho-alpha-D-ribose 1-diphosphate: step 5/9. In terms of biological role, IGPS catalyzes the conversion of PRFAR and glutamine to IGP, AICAR and glutamate. The HisH subunit catalyzes the hydrolysis of glutamine to glutamate and ammonia as part of the synthesis of IGP and AICAR. The resulting ammonia molecule is channeled to the active site of HisF. The chain is Imidazole glycerol phosphate synthase subunit HisH from Moorella thermoacetica (strain ATCC 39073 / JCM 9320).